Here is a 596-residue protein sequence, read N- to C-terminus: Adenine deaminase (596 aa).

This sequence belongs to the metallo-dependent hydrolases superfamily. Adenine deaminase family. Mn(2+) serves as cofactor.

The catalysed reaction is adenine + H2O + H(+) = hypoxanthine + NH4(+). The polypeptide is Adenine deaminase (Moorella thermoacetica (strain ATCC 39073 / JCM 9320)).